Consider the following 418-residue polypeptide: Neurotensin receptor type 1 (418 aa).

Residues 1-67 (MRLNSSAPGT…TDIYSKVLVT (67 aa)) lie on the Extracellular side of the membrane. Asparagine 4, asparagine 37, and asparagine 41 each carry an N-linked (GlcNAc...) asparagine glycan. A helical membrane pass occupies residues 68-88 (AVYLALFVVGTVGNTVTAFTL). Topologically, residues 89 to 102 (ARKKSLQSLQSTVH) are cytoplasmic. A helical transmembrane segment spans residues 103 to 122 (YHLGSLALSDLLTLLLAMPV). The Extracellular portion of the chain corresponds to 123–142 (ELYNFIWVHHPWAFGDAGCR). Cysteines 141 and 224 form a disulfide. Residues 143-164 (GYYFLRDACTYATALNVASLSV) traverse the membrane as a helical segment. Over 165–184 (ERYLAICHPFKAKTLMSRSR) the chain is Cytoplasmic. A helical membrane pass occupies residues 185-205 (TKKFISAIWLASALLAVPMLF). Residues 206–234 (TMGEQNRSADGQHAGGLVCTPTIHTATVK) are Extracellular-facing. Residues 235–259 (VVIQVNTFMSFIFPMVVISVLNTII) traverse the membrane as a helical segment. The Cytoplasmic segment spans residues 260–303 (ANKLTVMVRQAAEQGQVCTVGGEHSTFSMAIEPGRVQALRHGVR). The chain crosses the membrane as a helical span at residues 304-325 (VLRAVVIAFVVCWLPYHVRRLM). The neurotensin binding stretch occupies residues 321 to 344 (VRRLMFCYISDEQWTPFLYDFYHY). The Extracellular segment spans residues 326-343 (FCYISDEQWTPFLYDFYH). A helical transmembrane segment spans residues 344 to 364 (YFYMVTNALFYVSSTINPILY). At 365–418 (NLVSANFRHIFLATLACLCPVWRRRRKRPAFSRKADSVSSNHTLSSNATRETLY) the chain is on the cytoplasmic side. S-palmitoyl cysteine attachment occurs at residues cysteine 381 and cysteine 383.

The protein belongs to the G-protein coupled receptor 1 family. Neurotensin receptor subfamily. NTSR1 sub-subfamily. As to quaternary structure, interacts (palmitoylated form) with GNA11. In terms of processing, N-glycosylated. Post-translationally, palmitoylated; this is required for normal localization at membrane rafts and normal GNA11-mediated activation of down-stream signaling cascades. The palmitoylation level increases in response to neurotensin treatment. In terms of tissue distribution, expressed in prostate (at protein level). Detected in colon and peripheral blood mononuclear cells. Detected at very low levels in brain.

Its subcellular location is the cell membrane. It localises to the membrane raft. Its function is as follows. G-protein coupled receptor for the tridecapeptide neurotensin (NTS). Signaling is effected via G proteins that activate a phosphatidylinositol-calcium second messenger system. Signaling leads to the activation of downstream MAP kinases and protects cells against apoptosis. The sequence is that of Neurotensin receptor type 1 (NTSR1) from Homo sapiens (Human).